The sequence spans 297 residues: tRNA dimethylallyltransferase (297 aa).

Gly-10 to Ser-17 contacts ATP. Thr-12–Ser-17 lines the substrate pocket. Positions Asp-36–Gln-39 are interaction with substrate tRNA.

The protein belongs to the IPP transferase family. Monomer. It depends on Mg(2+) as a cofactor.

It catalyses the reaction adenosine(37) in tRNA + dimethylallyl diphosphate = N(6)-dimethylallyladenosine(37) in tRNA + diphosphate. Its function is as follows. Catalyzes the transfer of a dimethylallyl group onto the adenine at position 37 in tRNAs that read codons beginning with uridine, leading to the formation of N6-(dimethylallyl)adenosine (i(6)A). The polypeptide is tRNA dimethylallyltransferase (Wolbachia pipientis subsp. Culex pipiens (strain wPip)).